The sequence spans 160 residues: Serine-protein kinase RsbW (160 aa).

The protein belongs to the anti-sigma-factor family.

It carries out the reaction L-seryl-[protein] + ATP = O-phospho-L-seryl-[protein] + ADP + H(+). The enzyme catalyses L-threonyl-[protein] + ATP = O-phospho-L-threonyl-[protein] + ADP + H(+). Its function is as follows. Negative regulator of sigma-B activity. Phosphorylates and inactivates its specific antagonist protein, RsbV. Upon phosphorylation of RsbV, RsbW is released and binds to sigma-B, thereby blocking its ability to form an RNA polymerase holoenzyme (E-sigma-B). This Bacillus velezensis (strain DSM 23117 / BGSC 10A6 / LMG 26770 / FZB42) (Bacillus amyloliquefaciens subsp. plantarum) protein is Serine-protein kinase RsbW.